A 262-amino-acid polypeptide reads, in one-letter code: Type III pantothenate kinase (262 aa).

6-13 (DVGNTNAV) serves as a coordination point for ATP. Substrate-binding positions include Tyr-100 and 107–110 (GADR). Asp-109 serves as the catalytic Proton acceptor. Asp-129 is a binding site for K(+). Thr-132 is a binding site for ATP. Thr-184 is a substrate binding site.

This sequence belongs to the type III pantothenate kinase family. As to quaternary structure, homodimer. The cofactor is NH4(+). K(+) is required as a cofactor.

The protein localises to the cytoplasm. It carries out the reaction (R)-pantothenate + ATP = (R)-4'-phosphopantothenate + ADP + H(+). The protein operates within cofactor biosynthesis; coenzyme A biosynthesis; CoA from (R)-pantothenate: step 1/5. Catalyzes the phosphorylation of pantothenate (Pan), the first step in CoA biosynthesis. The protein is Type III pantothenate kinase of Bacillus cereus (strain B4264).